Consider the following 904-residue polypeptide: Leucine--tRNA ligase (904 aa).

The 'HIGH' region motif lies at 49–59; the sequence is PYPSGDLHIGH. Residues 663-667 carry the 'KMSKS' region motif; that stretch reads TMSKS. Lysine 666 lines the ATP pocket.

This sequence belongs to the class-I aminoacyl-tRNA synthetase family.

It is found in the cytoplasm. It catalyses the reaction tRNA(Leu) + L-leucine + ATP = L-leucyl-tRNA(Leu) + AMP + diphosphate. The sequence is that of Leucine--tRNA ligase from Roseiflexus castenholzii (strain DSM 13941 / HLO8).